The following is a 637-amino-acid chain: Biosynthetic arginine decarboxylase (637 aa).

Lys101 is subject to N6-(pyridoxal phosphate)lysine. 286–296 (FDVGGGLAVDY) provides a ligand contact to substrate.

This sequence belongs to the Orn/Lys/Arg decarboxylase class-II family. SpeA subfamily. Mg(2+) serves as cofactor. It depends on pyridoxal 5'-phosphate as a cofactor.

It catalyses the reaction L-arginine + H(+) = agmatine + CO2. It functions in the pathway amine and polyamine biosynthesis; agmatine biosynthesis; agmatine from L-arginine: step 1/1. Catalyzes the biosynthesis of agmatine from arginine. The chain is Biosynthetic arginine decarboxylase from Shewanella halifaxensis (strain HAW-EB4).